Consider the following 416-residue polypeptide: Protein sine oculis (416 aa).

2 disordered regions span residues 32–91 (TGLS…SGGG) and 262–329 (VSNW…NNGL). Over residues 42-57 (NNNNNNSSTSNNNNST) the composition is skewed to low complexity. The span at 79–91 (NGGGGGGVVSGGG) shows a compositional bias: gly residues. Residues 218–277 (GEETSYCFKEKSRSVLRDWYSHNPYPSPREKRDLAEATGLTTTQVSNWFKNRRQRDRAAE) constitute a DNA-binding region (homeobox). Residues 273 to 290 (DRAAEHKDGSTDKQHLDS) are compositionally biased toward basic and acidic residues. A compositionally biased stretch (low complexity) spans 291–329 (SSDSEMEGSMLPSQSAQHQQQQQQQQHSPGNSSGNNNGL).

It belongs to the SIX/Sine oculis homeobox family. In developing embryos, expressed in the eye disk epithelium, bolwig's organ and the optic lobe primordium at areas of invagination. In adults, present in photoreceptor cells in the apical regions of the retina, and in optic lobes.

It is found in the nucleus. Required for visual system development. May transcriptionally regulate genes necessary for optic lobe invagination and Bolwig's nerve formation. This is Protein sine oculis (so) from Drosophila melanogaster (Fruit fly).